A 432-amino-acid polypeptide reads, in one-letter code: Ectonucleoside triphosphate diphosphohydrolase 5 (432 aa).

The N-terminal stretch at 1–24 (MALYQGAAFFMLVASCVCSTVFHR) is a signal peptide. Glutamate 175 serves as the catalytic Proton acceptor. N-linked (GlcNAc...) asparagine glycosylation occurs at asparagine 235. Cystine bridges form between cysteine 275–cysteine 307 and cysteine 367–cysteine 381. N-linked (GlcNAc...) asparagine glycosylation is present at asparagine 372.

Belongs to the GDA1/CD39 NTPase family. In terms of assembly, monomer; active form. Homodimer; disulfide-linked. Homodimers are enzymatically inactive. It depends on Ca(2+) as a cofactor. Mg(2+) is required as a cofactor. N-glycosylated; high-mannose type.

The protein localises to the endoplasmic reticulum. It localises to the secreted. The enzyme catalyses a ribonucleoside 5'-diphosphate + H2O = a ribonucleoside 5'-phosphate + phosphate + H(+). It catalyses the reaction GDP + H2O = GMP + phosphate + H(+). The catalysed reaction is UDP + H2O = UMP + phosphate + H(+). It carries out the reaction IDP + H2O = IMP + phosphate + H(+). The enzyme catalyses CDP + H2O = CMP + phosphate + H(+). It catalyses the reaction ADP + H2O = AMP + phosphate + H(+). It functions in the pathway protein modification; protein glycosylation. Functionally, hydrolyzes nucleoside diphosphates with a preference for GDP, IDP and UDP compared to ADP and CDP. In the lumen of the endoplasmic reticulum, hydrolyzes UDP that acts as an end-product feedback inhibitor of the UDP-Glc:glycoprotein glucosyltransferases. UMP can be transported back by an UDP-sugar antiporter to the cytosol where it is consumed to regenerate UDP-glucose. Therefore, it positively regulates protein reglucosylation by clearing UDP from the ER lumen and by promoting the regeneration of UDP-glucose. Protein reglucosylation is essential to proper glycoprotein folding and quality control in the ER. This is Ectonucleoside triphosphate diphosphohydrolase 5 (ENTPD5) from Bos taurus (Bovine).